The primary structure comprises 341 residues: S-adenosylmethionine:tRNA ribosyltransferase-isomerase (341 aa).

The protein belongs to the QueA family. Monomer.

It is found in the cytoplasm. It catalyses the reaction 7-aminomethyl-7-carbaguanosine(34) in tRNA + S-adenosyl-L-methionine = epoxyqueuosine(34) in tRNA + adenine + L-methionine + 2 H(+). It functions in the pathway tRNA modification; tRNA-queuosine biosynthesis. In terms of biological role, transfers and isomerizes the ribose moiety from AdoMet to the 7-aminomethyl group of 7-deazaguanine (preQ1-tRNA) to give epoxyqueuosine (oQ-tRNA). The polypeptide is S-adenosylmethionine:tRNA ribosyltransferase-isomerase (Staphylococcus epidermidis (strain ATCC 35984 / DSM 28319 / BCRC 17069 / CCUG 31568 / BM 3577 / RP62A)).